Reading from the N-terminus, the 399-residue chain is MALKFNPLVSQPYKLASSARPPVSTFRSPKFLCLASSSSPALSSKEVESLKKPFTPPREVHLQVLHSMPPQKIEIFKSMEDRAEQNLLPHLKDVEKSWQPQDFLPDPASDGFEDQVKELRERARELPDDYFVVLVGDMITEEALPTYQTMLNTLDGVRDETGASPTSWAVWTRAWTAEENRHGDLLNKYLYLSGRVDMRQIEKTIQYLIGSGMDPRTENNPYLGFIYTSFQERATFVSHGNTARQAKEHGDLKLAQICGTIAADEKRHETAYTKIVEKLLEIDPDGTVVAFADMMRKKISMPAHLMYDGRDDNLFDNFSSVAQRLGVYTAKDYADILEFLAGRWRIESLTGLSGEGNKAQEYLCGLTPRIRRLDERAQARAKKGPKIPFSWIHDREVQL.

The transit peptide at M1 to L34 directs the protein to the chloroplast. Fe cation contacts are provided by E141, E179, H182, E232, E265, and H268.

Belongs to the fatty acid desaturase type 2 family. Homodimer. It depends on Fe(2+) as a cofactor. In terms of tissue distribution, developing seeds.

The protein localises to the plastid. Its subcellular location is the chloroplast. The enzyme catalyses octadecanoyl-[ACP] + 2 reduced [2Fe-2S]-[ferredoxin] + O2 + 2 H(+) = (9Z)-octadecenoyl-[ACP] + 2 oxidized [2Fe-2S]-[ferredoxin] + 2 H2O. It functions in the pathway lipid metabolism; fatty acid metabolism. Converts stearoyl-ACP to oleoyl-ACP by introduction of a cis double bond between carbons Delta(9) and Delta(10) of the acyl chain. This chain is Stearoyl-[acyl-carrier-protein] 9-desaturase, seed specific, chloroplastic, found in Brassica napus (Rape).